Reading from the N-terminus, the 181-residue chain is Ribonuclease HII (181 aa).

The RNase H type-2 domain occupies 1–181; it reads MICGIDEVGR…SLHRKNFKLI (181 aa). Asp-6, Glu-7, and Asp-98 together coordinate a divalent metal cation.

The protein belongs to the RNase HII family. The cofactor is Mn(2+). It depends on Mg(2+) as a cofactor.

The protein resides in the cytoplasm. The enzyme catalyses Endonucleolytic cleavage to 5'-phosphomonoester.. Functionally, endonuclease that specifically degrades the RNA of RNA-DNA hybrids. The polypeptide is Ribonuclease HII (Borreliella burgdorferi (strain ZS7) (Borrelia burgdorferi)).